Consider the following 421-residue polypeptide: Serine--tRNA ligase (421 aa).

230–232 is a binding site for L-serine; the sequence is TAE. Position 259-261 (259-261) interacts with ATP; that stretch reads RRE. L-serine is bound at residue E282. 346–349 serves as a coordination point for ATP; that stretch reads EISS. An L-serine-binding site is contributed by S380.

It belongs to the class-II aminoacyl-tRNA synthetase family. Type-1 seryl-tRNA synthetase subfamily. In terms of assembly, homodimer. The tRNA molecule binds across the dimer.

It localises to the cytoplasm. It carries out the reaction tRNA(Ser) + L-serine + ATP = L-seryl-tRNA(Ser) + AMP + diphosphate + H(+). The enzyme catalyses tRNA(Sec) + L-serine + ATP = L-seryl-tRNA(Sec) + AMP + diphosphate + H(+). Its pathway is aminoacyl-tRNA biosynthesis; selenocysteinyl-tRNA(Sec) biosynthesis; L-seryl-tRNA(Sec) from L-serine and tRNA(Sec): step 1/1. Functionally, catalyzes the attachment of serine to tRNA(Ser). Is also able to aminoacylate tRNA(Sec) with serine, to form the misacylated tRNA L-seryl-tRNA(Sec), which will be further converted into selenocysteinyl-tRNA(Sec). The protein is Serine--tRNA ligase of Methanosarcina acetivorans (strain ATCC 35395 / DSM 2834 / JCM 12185 / C2A).